The chain runs to 175 residues: Bifunctional protein PyrR (175 aa).

Residues 40–41, Arg-85, 102–110, Arg-135, and Val-159 each bind substrate; these read TR and DDVLYTGRT. A PRPP-binding motif is present at residues 98 to 110; the sequence is VIIIDDVLYTGRT.

Belongs to the purine/pyrimidine phosphoribosyltransferase family. PyrR subfamily. As to quaternary structure, homodimer and homohexamer; in equilibrium.

The catalysed reaction is UMP + diphosphate = 5-phospho-alpha-D-ribose 1-diphosphate + uracil. In terms of biological role, regulates transcriptional attenuation of the pyrimidine nucleotide (pyr) operon by binding in a uridine-dependent manner to specific sites on pyr mRNA. This disrupts an antiterminator hairpin in the RNA and favors formation of a downstream transcription terminator, leading to a reduced expression of downstream genes. Its function is as follows. Also displays a weak uracil phosphoribosyltransferase activity which is not physiologically significant. In Staphylococcus saprophyticus subsp. saprophyticus (strain ATCC 15305 / DSM 20229 / NCIMB 8711 / NCTC 7292 / S-41), this protein is Bifunctional protein PyrR.